Here is a 217-residue protein sequence, read N- to C-terminus: Oxygen-insensitive NAD(P)H nitroreductase (217 aa).

10-14 provides a ligand contact to FMN; it reads RHSTK. Lysine 14, threonine 41, threonine 67, asparagine 71, lysine 74, and arginine 107 together coordinate NAD(+). FMN is bound at residue asparagine 71. FMN-binding positions include 165-166 and 205-207; these read EG and KSR.

The protein belongs to the nitroreductase family. As to quaternary structure, homodimer. FMN is required as a cofactor.

Its function is as follows. Reduction of a variety of nitroaromatic compounds using NADH (and to lesser extent NADPH) as source of reducing equivalents; two electrons are transferred. The protein is Oxygen-insensitive NAD(P)H nitroreductase of Enterobacter cloacae.